The chain runs to 312 residues: Retinol dehydrogenase 8 (312 aa).

NADP(+) is bound at residue 9-18 (LISGCSSGIG). 3 helical membrane-spanning segments follow: residues 87–107 (VLVN…SLAA), 138–158 (IVVV…VYAA), and 170–190 (LAVQ…GPVV). Ser-143 serves as a coordination point for substrate. The active-site Proton acceptor is the Tyr-156.

Belongs to the short-chain dehydrogenases/reductases (SDR) family. Detected in photoreceptor outer segments in the retina (at protein level).

The protein resides in the membrane. The enzyme catalyses all-trans-retinol + NADP(+) = all-trans-retinal + NADPH + H(+). Its function is as follows. Retinol dehydrogenase with a clear preference for NADP. Converts all-trans-retinal to all-trans-retinol. May play a role in the regeneration of visual pigment at high light intensity. This chain is Retinol dehydrogenase 8 (RDH8), found in Bos taurus (Bovine).